We begin with the raw amino-acid sequence, 362 residues long: 3-dehydroquinate synthase (362 aa).

This sequence belongs to the archaeal-type DHQ synthase family.

It catalyses the reaction 2-amino-2,3,7-trideoxy-D-lyxo-hept-6-ulosonate + NAD(+) + H2O = 3-dehydroquinate + NH4(+) + NADH + H(+). In terms of biological role, catalyzes the oxidative deamination and cyclization of 2-amino-3,7-dideoxy-D-threo-hept-6-ulosonic acid (ADH) to yield 3-dehydroquinate (DHQ), which is fed into the canonical shikimic pathway of aromatic amino acid biosynthesis. The chain is 3-dehydroquinate synthase from Methanothrix thermoacetophila (strain DSM 6194 / JCM 14653 / NBRC 101360 / PT) (Methanosaeta thermophila).